Consider the following 401-residue polypeptide: S-adenosylmethionine synthase 1 (401 aa).

Residue histidine 15 participates in ATP binding. Aspartate 17 contacts Mg(2+). Residue glutamate 43 coordinates K(+). Residues glutamate 56 and glutamine 98 each coordinate L-methionine. The segment at 98-108 (QSPDIAQGVDK) is flexible loop. ATP contacts are provided by residues 173–175 (DGK), 246–247 (RF), aspartate 255, 261–262 (RK), alanine 278, and lysine 282. Aspartate 255 provides a ligand contact to L-methionine. Lysine 286 contributes to the L-methionine binding site.

This sequence belongs to the AdoMet synthase family. Homotetramer; dimer of dimers. Requires Mg(2+) as cofactor. K(+) is required as a cofactor.

Its subcellular location is the cytoplasm. The enzyme catalyses L-methionine + ATP + H2O = S-adenosyl-L-methionine + phosphate + diphosphate. It participates in amino-acid biosynthesis; S-adenosyl-L-methionine biosynthesis; S-adenosyl-L-methionine from L-methionine: step 1/1. In terms of biological role, catalyzes the formation of S-adenosylmethionine (AdoMet) from methionine and ATP. The overall synthetic reaction is composed of two sequential steps, AdoMet formation and the subsequent tripolyphosphate hydrolysis which occurs prior to release of AdoMet from the enzyme. The chain is S-adenosylmethionine synthase 1 from Frankia casuarinae (strain DSM 45818 / CECT 9043 / HFP020203 / CcI3).